We begin with the raw amino-acid sequence, 341 residues long: UDP-N-acetylenolpyruvoylglucosamine reductase (341 aa).

An FAD-binding PCMH-type domain is found at Phe13 to Ala185. Arg161 is a catalytic residue. Ser231 acts as the Proton donor in catalysis. Glu327 is an active-site residue.

This sequence belongs to the MurB family. Requires FAD as cofactor.

It localises to the cytoplasm. It catalyses the reaction UDP-N-acetyl-alpha-D-muramate + NADP(+) = UDP-N-acetyl-3-O-(1-carboxyvinyl)-alpha-D-glucosamine + NADPH + H(+). The protein operates within cell wall biogenesis; peptidoglycan biosynthesis. Its function is as follows. Cell wall formation. The sequence is that of UDP-N-acetylenolpyruvoylglucosamine reductase from Shewanella sp. (strain MR-4).